The primary structure comprises 359 residues: MSTPASTPAPDGSHQRDHHPGTRVEFRGVTKVFTNNKNTETVALDDVSLTVEPGEVIGIIGYSGAGKSTLVRMINGLDTPTSGALLLDGTDIVGMPEAKMRKLRSRIGMIFQQFNLFQSRTAAGNVEYPLELAKMDKAQRKARVREMLDFVGLSDKGRNYPEQLSGGQKQRVGIARALATNPSLLLADEATSALDPETTQEVLALLRKVNKELGITIVVITHEMEVVRSIADKVAVMEAGRVVEYGSVYEVFSNPQTTVAQRFVATALRNTPDMVEEEDLLFHEGRLFTIDLTEDSGFFAASAIAADNGVSINVVHGGVTTLQRQSFGKITVRLTGNPAAIEEFHRSLTRTTTIKEITR.

Residues Met-1–Gly-21 form a disordered region. One can recognise an ABC transporter domain in the interval Val-24 to Val-264. Residue Gly-61–Ser-68 coordinates ATP.

It belongs to the ABC transporter superfamily. Methionine importer (TC 3.A.1.24) family. As to quaternary structure, the complex is composed of two ATP-binding proteins (MetN), two transmembrane proteins (MetI) and a solute-binding protein (MetQ).

It is found in the cell membrane. The enzyme catalyses L-methionine(out) + ATP + H2O = L-methionine(in) + ADP + phosphate + H(+). It carries out the reaction D-methionine(out) + ATP + H2O = D-methionine(in) + ADP + phosphate + H(+). Its function is as follows. Part of the ABC transporter complex MetNIQ involved in methionine import. Responsible for energy coupling to the transport system. In Corynebacterium efficiens (strain DSM 44549 / YS-314 / AJ 12310 / JCM 11189 / NBRC 100395), this protein is Methionine import ATP-binding protein MetN.